A 237-amino-acid chain; its full sequence is Lycopene beta-cyclase (237 aa).

The next 7 membrane-spanning stretches (helical) occupy residues 3–23 (TSYLTFLAVAVGPPLVALGVV), 38–58 (VGILLALALSYTTPWDNYLIA), 80–100 (EYLFVITQTLLTGLWVQALPL), 113–133 (AVLGALAGVLVGCGGAVLLTV), 137–157 (FYIGAIIAWAAPVLALQWAVG), 170–192 (AAVLVPTLFLSAADRYAIADGIW), and 213–233 (AFFFVTNVFVSQGLILYAWVL).

Belongs to the lycopene beta-cyclase family.

The protein resides in the cell membrane. The catalysed reaction is a carotenoid psi-end group = a carotenoid beta-end derivative. The enzyme catalyses all-trans-lycopene = gamma-carotene. It carries out the reaction gamma-carotene = all-trans-beta-carotene. Its pathway is carotenoid biosynthesis; beta-carotene biosynthesis. Catalyzes the cyclization of both ends of lycopene to form beta-carotene, a retinal precursor. Is required for bacteriorhodopsin biogenesis, a light-driven proton pump with a covalently bound retinal cofactor. The protein is Lycopene beta-cyclase of Halobacterium salinarum (strain ATCC 29341 / DSM 671 / R1).